Consider the following 336-residue polypeptide: MAFNLRNRNFLKMLDFTPREIRYLLDLSRDLKRAKYSGTEQQHLKGKNVALIFEKTSTRTRCAFEVACFDQGANVSYIGPSGSQIGHKESMKDTARVLGRMYDAIEYRGYSQDMVEHELAAYAGVPVYNGLTDEYHPTQMLADVLTMWEHSDKPISQISYTYLGDARNNMGNSLLVIGSKLGMDVRIGAPKHLWPTDELVAECREIAKRTGARITLTEDPKEAVKGTDFIHTDVWVSMGEPAEVWAERIRLLKPYQVNSALMAASGNPQVKFMHCLPAFHNSETKVGKEISAQYPELANGIEVTEDVFESEACIAFEQAENRMHTIKAILVSTLGD.

Carbamoyl phosphate contacts are provided by residues 57-60, Gln-84, Arg-108, and 136-139; these read STRT and HPTQ. L-ornithine is bound by residues Asn-169, Asp-233, and 237-238; that span reads SM. Residues 275 to 276 and Arg-322 each bind carbamoyl phosphate; that span reads CL.

It belongs to the aspartate/ornithine carbamoyltransferase superfamily. OTCase family.

The protein resides in the cytoplasm. It carries out the reaction carbamoyl phosphate + L-ornithine = L-citrulline + phosphate + H(+). Its pathway is amino-acid degradation; L-arginine degradation via ADI pathway; carbamoyl phosphate from L-arginine: step 2/2. Functionally, reversibly catalyzes the transfer of the carbamoyl group from carbamoyl phosphate (CP) to the N(epsilon) atom of ornithine (ORN) to produce L-citrulline. This is Ornithine carbamoyltransferase, catabolic from Chromobacterium violaceum (strain ATCC 12472 / DSM 30191 / JCM 1249 / CCUG 213 / NBRC 12614 / NCIMB 9131 / NCTC 9757 / MK).